Consider the following 363-residue polypeptide: Peptide chain release factor 2 (363 aa).

N5-methylglutamine is present on Gln251.

It belongs to the prokaryotic/mitochondrial release factor family. Methylated by PrmC. Methylation increases the termination efficiency of RF2.

It localises to the cytoplasm. Peptide chain release factor 2 directs the termination of translation in response to the peptide chain termination codons UGA and UAA. This Helicobacter pylori (strain J99 / ATCC 700824) (Campylobacter pylori J99) protein is Peptide chain release factor 2 (prfB).